Reading from the N-terminus, the 445-residue chain is Methionine aminopeptidase 2 (445 aa).

A disordered region spans residues 1–76 (MAAQVASGVG…KKKCTSKVQT (76 aa)). The span at 57-71 (AKKKKKKTKKKKKCT) shows a compositional bias: basic residues. Histidine 195 provides a ligand contact to substrate. The a divalent metal cation site is built by aspartate 215, aspartate 226, and histidine 295. A substrate-binding site is contributed by histidine 303. Glutamate 331 and glutamate 426 together coordinate a divalent metal cation.

Belongs to the peptidase M24A family. Methionine aminopeptidase eukaryotic type 2 subfamily. Co(2+) is required as a cofactor. It depends on Zn(2+) as a cofactor. The cofactor is Mn(2+). Fe(2+) serves as cofactor.

It is found in the cytoplasm. It catalyses the reaction Release of N-terminal amino acids, preferentially methionine, from peptides and arylamides.. In terms of biological role, cotranslationally removes the N-terminal methionine from nascent proteins. The N-terminal methionine is often cleaved when the second residue in the primary sequence is small and uncharged (Met-Ala-, Cys, Gly, Pro, Ser, Thr, or Val). The polypeptide is Methionine aminopeptidase 2 (Paracoccidioides lutzii (strain ATCC MYA-826 / Pb01) (Paracoccidioides brasiliensis)).